The following is a 1102-amino-acid chain: Probable DNA-directed RNA polymerase (1102 aa).

Residues Asp-734, Lys-804, and Asp-980 contribute to the active site.

Belongs to the phage and mitochondrial RNA polymerase family.

It localises to the mitochondrion. The enzyme catalyses RNA(n) + a ribonucleoside 5'-triphosphate = RNA(n+1) + diphosphate. In terms of biological role, DNA-dependent RNA polymerase catalyzes the transcription of DNA into RNA using the four ribonucleoside triphosphates as substrates. This chain is Probable DNA-directed RNA polymerase, found in Agaricus bitorquis (Pavement mushroom).